Consider the following 249-residue polypeptide: Deoxyribose-phosphate aldolase (249 aa).

The active-site Proton donor/acceptor is the aspartate 105. The active-site Schiff-base intermediate with acetaldehyde is lysine 168. Catalysis depends on lysine 216, which acts as the Proton donor/acceptor.

This sequence belongs to the DeoC/FbaB aldolase family. DeoC type 1 subfamily.

The protein localises to the cytoplasm. The catalysed reaction is 2-deoxy-D-ribose 5-phosphate = D-glyceraldehyde 3-phosphate + acetaldehyde. It participates in carbohydrate degradation; 2-deoxy-D-ribose 1-phosphate degradation; D-glyceraldehyde 3-phosphate and acetaldehyde from 2-deoxy-alpha-D-ribose 1-phosphate: step 2/2. Catalyzes a reversible aldol reaction between acetaldehyde and D-glyceraldehyde 3-phosphate to generate 2-deoxy-D-ribose 5-phosphate. The protein is Deoxyribose-phosphate aldolase of Corynebacterium jeikeium (strain K411).